Reading from the N-terminus, the 333-residue chain is Chemokine XC receptor 1 (333 aa).

Topologically, residues 1-31 are extracellular; sequence MESSGNPESTTFFYYDLQSQPCENQAWVFAT. The chain crosses the membrane as a helical span at residues 32–59; sequence LATTVLYCLVFLLSLVGNSLVLWVLVKY. The Cytoplasmic portion of the chain corresponds to 60 to 69; that stretch reads ESLESLTNIF. A helical membrane pass occupies residues 70–89; it reads ILNLCLSDLVFACLLPVWIS. Over 90–103 the chain is Extracellular; it reads PYHWGWVLGDFLCK. Cysteine 102 and cysteine 175 are disulfide-bonded. The helical transmembrane segment at 104-125 threads the bilayer; sequence LLNMIFSISLYSSIFFLTIMTI. The Cytoplasmic segment spans residues 126 to 142; that stretch reads HRYLSVVSPLSTLRVPT. A helical membrane pass occupies residues 143–167; that stretch reads LRCRVLVTMAVWVASILSSILDTIF. Over 168 to 190 the chain is Extracellular; the sequence is HKVLSSGCDYSELTWYLTSVYQH. A helical transmembrane segment spans residues 191 to 209; that stretch reads NLFFLLSLGIILFCYVEIL. Residues 210-225 are Cytoplasmic-facing; sequence RTLFRSRSKRRHRTVK. A helical membrane pass occupies residues 226–250; the sequence is LIFAIVVAYFLSWGPYNFTLFLQTL. The Extracellular segment spans residues 251 to 267; the sequence is FRTQIIRSCEAKQQLEY. Residues 268 to 291 form a helical membrane-spanning segment; sequence ALLICRNLAFSHCCFNPVLYVFVG. Residues 292–333 are Cytoplasmic-facing; that stretch reads VKFRTHLKHVLRQFWFCRLQAPSPASIPHSPGAFAYEGASFY.

This sequence belongs to the G-protein coupled receptor 1 family.

It localises to the cell membrane. Functionally, receptor for chemokines SCYC1 and SCYC2. Subsequently transduces a signal by increasing the intracellular calcium ions level. Receptor for XCL1/Lymphotactin. The chain is Chemokine XC receptor 1 (XCR1) from Homo sapiens (Human).